Here is a 539-residue protein sequence, read N- to C-terminus: Phosphoenolpyruvate carboxykinase (ATP) (539 aa).

Residues Arg64, Tyr206, and Lys212 each contribute to the substrate site. Residues Lys212, His231, and 247-255 (GLSGTGKTT) contribute to the ATP site. 2 residues coordinate Mn(2+): Lys212 and His231. Asp268 provides a ligand contact to Mn(2+). ATP contacts are provided by residues Glu296, Arg332, 448–449 (RI), and Thr454. Substrate is bound at residue Arg332.

The protein belongs to the phosphoenolpyruvate carboxykinase (ATP) family. Monomer. It depends on Mn(2+) as a cofactor.

The protein localises to the cytoplasm. It catalyses the reaction oxaloacetate + ATP = phosphoenolpyruvate + ADP + CO2. The protein operates within carbohydrate biosynthesis; gluconeogenesis. Involved in the gluconeogenesis. Catalyzes the conversion of oxaloacetate (OAA) to phosphoenolpyruvate (PEP) through direct phosphoryl transfer between the nucleoside triphosphate and OAA. This Yersinia pestis bv. Antiqua (strain Antiqua) protein is Phosphoenolpyruvate carboxykinase (ATP).